A 140-amino-acid chain; its full sequence is Cytochrome c-type biogenesis protein CcmE (140 aa).

Topologically, residues 1-7 (MTKRQNR) are cytoplasmic. The chain crosses the membrane as a helical; Signal-anchor for type II membrane protein span at residues 8 to 28 (MVLVALLVIGVSLAGYLGLKA). Residues 29-140 (FNENLLYFLS…DALEKAKNKQ (112 aa)) are Periplasmic-facing. 2 residues coordinate heme: His-120 and Tyr-124.

It belongs to the CcmE/CycJ family.

The protein localises to the cell inner membrane. In terms of biological role, heme chaperone required for the biogenesis of c-type cytochromes. Transiently binds heme delivered by CcmC and transfers the heme to apo-cytochromes in a process facilitated by CcmF and CcmH. The protein is Cytochrome c-type biogenesis protein CcmE of Vesicomyosocius okutanii subsp. Calyptogena okutanii (strain HA).